A 406-amino-acid chain; its full sequence is Prenyltransferase phqJ (406 aa).

The segment covering Met1–Gln19 has biased composition (polar residues). A disordered region spans residues Met1–Pro23. Glu99 is a binding site for brevianamide F. Dimethylallyl diphosphate-binding residues include Arg113, Lys200, and Tyr202. Tyr204 is a brevianamide F binding site. Dimethylallyl diphosphate-binding residues include Lys269, Tyr271, and Tyr340.

The protein belongs to the tryptophan dimethylallyltransferase family.

It participates in alkaloid biosynthesis. Prenyltransferase; part of the gene cluster that mediates the biosynthesis of paraherquamide, a fungal indole alkaloid that belongs to a family of natural products containing a characteristic bicyclo[2.2.2]diazaoctane core. The first steps in the biosynthesis of paraherquamide is the production of the beta-methyl-proline precursor from L-isoleucine. They require oxidation of a terminally hydroxylated L-isoleucine to the corresponding aldehyde by enzymes which have still to be identified. Spontaneous cyclization and dehydration would yield the 4-methyl pyrolline-5-carboxylic acid, which is then reduced by the pyrroline-5-carboxylate reductase phqD leading to the beta-methyl-proline precursor. The next step of paraherquamide biosynthesis involves coupling of beta-methyl-proline and L-tryptophan by the bimodular NRPS phqB, to produce a monooxopiperazine intermediate. The reductase (R) domain of phqB utilizes NADPH for hydride transfer to reduce the thioester bond of the T domain-tethered linear dipeptide to a hemithioaminal intermediate, which spontaneously cleaves the C-S bond to release the aldehyde product. This compound undergoes spontaneous cyclization and dehydration to give a dienamine which is reverse prenylated at C-2 by the reverse prenyltransferase phqJ. The other prenyltransferase present in the cluster, phqI may be a redundant gene in the pathway. During biosynthetic assembly, the key step to produce the polycyclic core is catalyzed by the bifunctional reductase and intramolecular [4+2] Diels-Alderase, phqE, resulting in formation of the [2.2.2] diazaoctane intermediate preparaherquamide. Following formation of preparaherquamide, an indole 2,3-epoxidation-initiated pinacol-like rearrangement is catalyzed by the phqK FAD-dependent monooxygenase. The prenyltransferase phqA, the cytochrome P450 monooxygenase phqL, and the FAD-linked oxidoreductase phqH (or the cytochrome P450 monooxygenase phqM), are proposed to be involved in the formation of the pyran ring. The FAD-dependent monooxygenase phqK is likely responsible for generation of the spiro-oxindole, and the N-methylation is likely mediated by the phqN methyltransferase leading to the isolable natural product paraherquamide F. However, the order of these biosynthetic steps has still to be determined. In late-stage paraherquamide biosynthesis, the third P450 monooxygenase, phqO, is probably responsible for the C-14 hydroxylation, transforming paraherquamide F to paraherquamide G, and paraherquamide E to the final product paraherquamide A. The expansion from the 6-membered ring pyran (in paraherquamides F and G) to the 7-membered dioxepin ring (in paraherquamides A and E) represents a poorly understood but intriguing process that probably involves the 2-oxoglutarate-dependent dioxygenase phqC. Finally, the remaining members of the paraherquamide cluster, including phqI as well as phqM (or phqH), do not have a clearly prescribed role and appear to be redundant. The chain is Prenyltransferase phqJ from Penicillium fellutanum.